The primary structure comprises 307 residues: MTSNGLPVPAQNSNYMENGRWYHGFRRGLYMYPCDEPEKDRMDIYHQFFAVARRGQLHQAPVPSEPHLQPRILDVGCGTGIWAIDMADKYLNAEVLGLDLVNIQPEKIPPNLRFRVPRDYESPWTLGEDSWDLIHLRMACGSVESWPELYQKIYTHLKPGTGWIEHIEIDMEPRCDDYTLPPDSMLRKWYGWLADATQRAYRPIAYEHRTRQLLQAAGFIDIQETVIRVPYNTWPNDPHQKDIGRWYNLGLTEGLEALTFAPLTRVYHWDLNAHVRPIVEGVRRELCNRKIHAYNNIHIWTARRPQQ.

It belongs to the methyltransferase superfamily. LaeA methyltransferase family. As to quaternary structure, component of the heterotrimeric velvet complex composed of LAE1, VEL1 and VEL2; VEL1 acting as a bridging protein between LAE1 and VEL2.

It localises to the nucleus. It carries out the reaction L-methionyl-[protein] + S-adenosyl-L-methionine = S-methyl-L-methionyl-[protein] + S-adenosyl-L-homocysteine. Its function is as follows. Methyltransferase that performs automethylation. No other methyl-accepting substrate has been identified yet. Component of the velvet transcription factor complex that acts as a global regulator for secondary metabolite gene expression. Controls the expression of the T-toxin gene cluster. Promotes oxidative stress tolerance and acts as a virulence factors during infection. Negatively regulate mycelial pigmentation and controls sexual development, as well as asexual development during vegetative growth. The sequence is that of Secondary metabolism regulator LAE1 from Cochliobolus heterostrophus (strain C5 / ATCC 48332 / race O) (Southern corn leaf blight fungus).